A 484-amino-acid polypeptide reads, in one-letter code: tRNA sulfurtransferase (484 aa).

Residues 63–167 (EAFADRLSCI…RENLYLVVNR (105 aa)) enclose the THUMP domain. Residues 185–186 (LI), Lys-267, Gly-289, and Gln-298 each bind ATP. Cys-346 and Cys-458 form a disulfide bridge. Residues 406–484 (VNSNEVIIDV…GYENVKVYRP (79 aa)) enclose the Rhodanese domain. The active-site Cysteine persulfide intermediate is Cys-458.

It belongs to the ThiI family.

Its subcellular location is the cytoplasm. It carries out the reaction [ThiI sulfur-carrier protein]-S-sulfanyl-L-cysteine + a uridine in tRNA + 2 reduced [2Fe-2S]-[ferredoxin] + ATP + H(+) = [ThiI sulfur-carrier protein]-L-cysteine + a 4-thiouridine in tRNA + 2 oxidized [2Fe-2S]-[ferredoxin] + AMP + diphosphate. The catalysed reaction is [ThiS sulfur-carrier protein]-C-terminal Gly-Gly-AMP + S-sulfanyl-L-cysteinyl-[cysteine desulfurase] + AH2 = [ThiS sulfur-carrier protein]-C-terminal-Gly-aminoethanethioate + L-cysteinyl-[cysteine desulfurase] + A + AMP + 2 H(+). The protein operates within cofactor biosynthesis; thiamine diphosphate biosynthesis. Its function is as follows. Catalyzes the ATP-dependent transfer of a sulfur to tRNA to produce 4-thiouridine in position 8 of tRNAs, which functions as a near-UV photosensor. Also catalyzes the transfer of sulfur to the sulfur carrier protein ThiS, forming ThiS-thiocarboxylate. This is a step in the synthesis of thiazole, in the thiamine biosynthesis pathway. The sulfur is donated as persulfide by IscS. The sequence is that of tRNA sulfurtransferase from Shewanella sediminis (strain HAW-EB3).